Here is a 350-residue protein sequence, read N- to C-terminus: uncharacterized protein (350 aa).

3 consecutive transmembrane segments (helical) span residues 10–30 (YSFI…EVIG), 51–71 (FAGI…VTLT), and 327–347 (ILSL…LKLF).

Belongs to the 1-acyl-sn-glycerol-3-phosphate acyltransferase family.

The protein localises to the endoplasmic reticulum membrane. This is an uncharacterized protein from Schizosaccharomyces pombe (strain 972 / ATCC 24843) (Fission yeast).